The sequence spans 85 residues: Cell division topological specificity factor (85 aa).

It belongs to the MinE family.

In terms of biological role, prevents the cell division inhibition by proteins MinC and MinD at internal division sites while permitting inhibition at polar sites. This ensures cell division at the proper site by restricting the formation of a division septum at the midpoint of the long axis of the cell. The protein is Cell division topological specificity factor of Xylella fastidiosa (strain M12).